A 201-amino-acid polypeptide reads, in one-letter code: Small ribosomal subunit protein uS4 (201 aa).

A disordered region spans residues 1 to 45 (MARYTGPLTKKSRRLGTDLVGNDKSFERRPYPPGVHGRGRTKDSE). Residues 91-157 (SRLDNVVYRA…PPIVIARETF (67 aa)) form the S4 RNA-binding domain.

The protein belongs to the universal ribosomal protein uS4 family. In terms of assembly, part of the 30S ribosomal subunit. Contacts protein S5. The interaction surface between S4 and S5 is involved in control of translational fidelity.

Functionally, one of the primary rRNA binding proteins, it binds directly to 16S rRNA where it nucleates assembly of the body of the 30S subunit. With S5 and S12 plays an important role in translational accuracy. This chain is Small ribosomal subunit protein uS4, found in Cutibacterium acnes (strain DSM 16379 / KPA171202) (Propionibacterium acnes).